Reading from the N-terminus, the 172-residue chain is MSSSQNNNSSWIDWFLGIKGNQFLCRVPTDYVQDTFNQMGLEYFSEILDVILKPVIDSSSGLLYGDEKKWYGMIHARYIRSERGLIAMHRKYLRGDFGSCPNISCYRQNTLPVGLSAVWGKSTVKIHCPRCKSNFHPKSDTQLDGAMFGPSFPDIFFSMLPNLTSPLDDPRT.

Belongs to the casein kinase 2 subunit beta family. In terms of assembly, interacts in vitro with the casein kinase 2 alpha subunit (CkII-alpha). The relevance of such interaction is however unclear in vivo. Probably not expressed in wild-type flies. In males lacking the Y chromosome, it is testis-specific and constitutes the main component of star-shaped crystals.

Unknown. In males lacking the Y chromosome, its strong overexpression leads to the appearance of proteinaceous star-shaped crystals in the primary spermatocytes causing meiotic drive, possibly by interfering with normal casein kinase 2 activity. This Drosophila melanogaster (Fruit fly) protein is Stellate protein CG33243 (Ste:CG33243).